We begin with the raw amino-acid sequence, 469 residues long: Collagenase 3 (469 aa).

Residues 1 to 17 (SSLSVLVLSLSFAYCLS) form the signal peptide. A propeptide spans 18 to 100 (APVPQDEDSE…QPRCGVPDVG (83 aa)) (activation peptide). The short motif at 92 to 99 (PRCGVPDV) is the Cysteine switch element. C94 is a binding site for Zn(2+). An N-linked (GlcNAc...) asparagine glycan is attached at N115. D126 contributes to the Ca(2+) binding site. A glycan (N-linked (GlcNAc...) asparagine) is linked at N150. Residue D160 participates in Ca(2+) binding. Zn(2+)-binding residues include H170 and D172. The Ca(2+) site is built by D177, G178, and L182. H185 is a binding site for Zn(2+). The Ca(2+) site is built by G194 and D196. H198 provides a ligand contact to Zn(2+). Positions 200, 201, and 203 each coordinate Ca(2+). H220 contacts Zn(2+). E221 is an active-site residue. Zn(2+) is bound by residues H224, H230, and M238. An interaction with collagen region spans residues 266–469 (PGNRDPHPKH…ILKTNFVLMC (204 aa)). Hemopexin repeat units follow at residues 279–328 (PEKC…WPEL), 329–375 (PNKL…GFPK), 377–425 (LKAI…FPGI), and 426–469 (GEKV…VLMC). An intrachain disulfide couples C282 to C469. D289, I291, D333, A335, A383, and D430 together coordinate Ca(2+).

This sequence belongs to the peptidase M10A family. It depends on Ca(2+) as a cofactor. Zn(2+) is required as a cofactor. In terms of processing, the proenzyme is activated by removal of the propeptide; this cleavage can be effected by other matrix metalloproteinases and may involve several cleavage steps. Cleavage can also be autocatalytic, after partial maturation by another protease or after treatment with 4-aminophenylmercuric acetate (APMA) (in vitro).

Its subcellular location is the secreted. It localises to the extracellular space. It is found in the extracellular matrix. Plays a role in the degradation of extracellular matrix proteins including fibrillar collagen, fibronectin, TNC and ACAN. Cleaves several types of triple helical collagen. May also function by activating or degrading key regulatory proteins. Plays a role in wound healing, tissue remodeling, cartilage degradation, bone development, bone mineralization and ossification. The sequence is that of Collagenase 3 (mmp13) from Xenopus laevis (African clawed frog).